Consider the following 222-residue polypeptide: MKLHDIDPDNRPRERFLQHGAAALSPAELLALILRSGSQQYNILDTCHHIINRFSLEKLSDVSLKELQQIKGIGESKAMQIVAIFELNRRLHYSRNQLRKIMAAGDVFEYMSGRIPDESKEHLFVLHLNTKNQVIKNELISIGTLNTAVIHPREIFKSAIRESAHSIIVVHNHPSGDVNPSNADKKITNELKQAGAFMQIEMLDHVIMSKTEWYSFRERGLL.

The MPN domain occupies 100-222 (KIMAAGDVFE…WYSFRERGLL (123 aa)). Zn(2+) contacts are provided by histidine 171, histidine 173, and aspartate 184. The JAMM motif signature appears at 171–184 (HNHPSGDVNPSNAD).

It belongs to the UPF0758 family.

In Chlorobium chlorochromatii (strain CaD3), this protein is UPF0758 protein Cag_1513.